Here is a 118-residue protein sequence, read N- to C-terminus: uncharacterized protein (118 aa).

The signal sequence occupies residues Met-1–Ser-27.

This is an uncharacterized protein from Haemophilus influenzae (strain ATCC 51907 / DSM 11121 / KW20 / Rd).